The chain runs to 114 residues: Putative movement protein (114 aa).

Residues 27–47 (LIGIILLVTVCLIVLWVCIML) form a helical membrane-spanning segment. Positions 79 to 114 (RTPFEATGPERERNWDARRQSTTVNPASQPNTGSVF) are disordered. The segment covering 86 to 97 (GPERERNWDARR) has biased composition (basic and acidic residues). The segment covering 98-114 (QSTTVNPASQPNTGSVF) has biased composition (polar residues).

This sequence belongs to the nanovirus movement protein family.

The protein resides in the host cell membrane. May transport viral genome to neighboring plant cells directly through plasmosdesmata, without any budding. The movement protein allows efficient cell to cell propagation, by bypassing the host cell wall barrier. The sequence is that of Putative movement protein (DNA-M) from Faba bean necrotic yellows virus (isolate Syrian SV292-88) (FBNYV).